The chain runs to 262 residues: Urease accessory protein UreD (262 aa).

It belongs to the UreD family. In terms of assembly, ureD, UreF and UreG form a complex that acts as a GTP-hydrolysis-dependent molecular chaperone, activating the urease apoprotein by helping to assemble the nickel containing metallocenter of UreC. The UreE protein probably delivers the nickel.

It is found in the cytoplasm. Required for maturation of urease via the functional incorporation of the urease nickel metallocenter. This Acetivibrio thermocellus (strain ATCC 27405 / DSM 1237 / JCM 9322 / NBRC 103400 / NCIMB 10682 / NRRL B-4536 / VPI 7372) (Clostridium thermocellum) protein is Urease accessory protein UreD.